Reading from the N-terminus, the 480-residue chain is Probable E3 ubiquitin protein ligase DRIPH (480 aa).

The RING-type zinc finger occupies 16 to 57 (CPICTNPFKDATTISECLHTFCRSCIRNKFINERVNACPVCN). Disordered stretches follow at residues 93-133 (GPKT…EPAN), 167-193 (RGRK…PKIK), 241-261 (TPPD…ESVE), and 280-356 (VNQN…EMKV). Residues 103–112 (SSKKKRKSRT) show a composition bias toward basic residues. The span at 113 to 133 (SLRVSSSRVSSSPDTPLEPAN) shows a compositional bias: low complexity. Basic and acidic residues predominate over residues 175–193 (KKIDSKPEPELPPKEPKIK). Acidic residues predominate over residues 246-260 (VEPEISSDDDTEESV). Residues 298-309 (GQKLKTNGAATS) show a composition bias toward polar residues.

The catalysed reaction is S-ubiquitinyl-[E2 ubiquitin-conjugating enzyme]-L-cysteine + [acceptor protein]-L-lysine = [E2 ubiquitin-conjugating enzyme]-L-cysteine + N(6)-ubiquitinyl-[acceptor protein]-L-lysine.. Its pathway is protein modification; protein ubiquitination. This chain is Probable E3 ubiquitin protein ligase DRIPH, found in Arabidopsis thaliana (Mouse-ear cress).